The chain runs to 546 residues: Chaperonin GroEL (546 aa).

Residues 29-32 (TLGP), K50, 86-90 (DGTTT), G414, 478-480 (NAA), and D494 each bind ATP.

The protein belongs to the chaperonin (HSP60) family. In terms of assembly, forms a cylinder of 14 subunits composed of two heptameric rings stacked back-to-back. Interacts with the co-chaperonin GroES.

The protein localises to the cytoplasm. It catalyses the reaction ATP + H2O + a folded polypeptide = ADP + phosphate + an unfolded polypeptide.. Its function is as follows. Together with its co-chaperonin GroES, plays an essential role in assisting protein folding. The GroEL-GroES system forms a nano-cage that allows encapsulation of the non-native substrate proteins and provides a physical environment optimized to promote and accelerate protein folding. The chain is Chaperonin GroEL from Psychrobacter arcticus (strain DSM 17307 / VKM B-2377 / 273-4).